A 445-amino-acid polypeptide reads, in one-letter code: Phosphoglucosamine mutase (445 aa).

Serine 102 acts as the Phosphoserine intermediate in catalysis. The Mg(2+) site is built by serine 102, aspartate 241, aspartate 243, and aspartate 245. A Phosphoserine modification is found at serine 102.

It belongs to the phosphohexose mutase family. Requires Mg(2+) as cofactor. In terms of processing, activated by phosphorylation.

The enzyme catalyses alpha-D-glucosamine 1-phosphate = D-glucosamine 6-phosphate. Catalyzes the conversion of glucosamine-6-phosphate to glucosamine-1-phosphate. This is Phosphoglucosamine mutase from Zymomonas mobilis subsp. mobilis (strain ATCC 31821 / ZM4 / CP4).